The following is a 118-amino-acid chain: Large ribosomal subunit protein bL20 (118 aa).

Belongs to the bacterial ribosomal protein bL20 family.

Functionally, binds directly to 23S ribosomal RNA and is necessary for the in vitro assembly process of the 50S ribosomal subunit. It is not involved in the protein synthesizing functions of that subunit. This chain is Large ribosomal subunit protein bL20, found in Yersinia pseudotuberculosis serotype O:1b (strain IP 31758).